A 428-amino-acid polypeptide reads, in one-letter code: Glutamate-1-semialdehyde 2,1-aminomutase (428 aa).

Residue Lys267 is modified to N6-(pyridoxal phosphate)lysine.

The protein belongs to the class-III pyridoxal-phosphate-dependent aminotransferase family. HemL subfamily. Homodimer. Pyridoxal 5'-phosphate is required as a cofactor.

The protein localises to the cytoplasm. The catalysed reaction is (S)-4-amino-5-oxopentanoate = 5-aminolevulinate. The protein operates within porphyrin-containing compound metabolism; protoporphyrin-IX biosynthesis; 5-aminolevulinate from L-glutamyl-tRNA(Glu): step 2/2. This chain is Glutamate-1-semialdehyde 2,1-aminomutase, found in Flavobacterium johnsoniae (strain ATCC 17061 / DSM 2064 / JCM 8514 / BCRC 14874 / CCUG 350202 / NBRC 14942 / NCIMB 11054 / UW101) (Cytophaga johnsonae).